Consider the following 57-residue polypeptide: Protein YnaL (57 aa).

A disordered region spans residues Leu7–Cys57. The span at Val11–Pro35 shows a compositional bias: pro residues. Over residues His46–Cys57 the composition is skewed to basic residues.

In Escherichia coli (strain K12), this protein is Protein YnaL.